Here is a 260-residue protein sequence, read N- to C-terminus: Methionine-rich nacre protein (260 aa).

Residues 1-19 form the signal peptide; it reads MRRILCLAVVIFIINDVSS. The interval 23-75 is disordered; that stretch reads GSNKNWKKSGMSLSSPGNKKPTGNNNAVPQKSKMNNVNQNSLSQPKRPSHPGN. Residues 33 to 68 show a composition bias toward polar residues; it reads MSLSSPGNKKPTGNNNAVPQKSKMNNVNQNSLSQPK.

In terms of tissue distribution, expressed in mantle distal zone, mantle margin and grafted pearl pockets. Not expressed in adductor muscle, gills, hemocytes or ungrafted pearl pockets. Within the mantle, specifically expressed in mineralizing outer epithelium cells (at protein level). After secretion incorporated into acid-insoluble nacre matrix of shell and pearl (at protein level). Not found in acid-insoluble matrix of shell prisms (at protein level).

It is found in the secreted. This chain is Methionine-rich nacre protein, found in Margaritifera margaritifera (Freshwater pearl mussel).